Reading from the N-terminus, the 87-residue chain is Large ribosomal subunit protein uL23c (87 aa).

The protein belongs to the universal ribosomal protein uL23 family. Part of the 50S ribosomal subunit.

It localises to the plastid. It is found in the chloroplast. Functionally, binds to 23S rRNA. The sequence is that of Large ribosomal subunit protein uL23c (rpl23) from Ostreococcus tauri.